The following is a 522-amino-acid chain: Proactivator polypeptide-like 1 (522 aa).

The signal sequence occupies residues 1 to 17 (MLCALILWSGLLGAARA). The propeptide occupies 18–59 (SPISVPRECAKGSEVWCQDLQAAAKCRAVRHCQSAVWNKPTV). Positions 19–59 (PISVPRECAKGSEVWCQDLQAAAKCRAVRHCQSAVWNKPTV) constitute a Saposin A-type 1 domain. 4 Saposin B-type domains span residues 60 to 144 (KSLP…EPLQ), 183 to 261 (EGAV…ERES), 291 to 371 (LGLT…GSKR), and 393 to 474 (QGSF…HGPK). Disulfide bonds link cysteine 64-cysteine 140, cysteine 67-cysteine 134, and cysteine 95-cysteine 107. Residues 146-183 (HLAETTSERPLTQEDANEVMAPFLSNGALSFHPSQMPE) constitute a propeptide that is removed on maturation. Cystine bridges form between cysteine 187-cysteine 257, cysteine 190-cysteine 251, and cysteine 216-cysteine 227. N-linked (GlcNAc...) asparagine glycosylation occurs at asparagine 204. Residues 261-290 (SAHWLTRVAAVDGVPSLEMEMPRTNELQMQ) constitute a propeptide that is removed on maturation. Intrachain disulfides connect cysteine 295–cysteine 367, cysteine 298–cysteine 361, and cysteine 326–cysteine 337. N-linked (GlcNAc...) (high mannose) asparagine glycosylation occurs at asparagine 312. The propeptide occupies 371–392 (RRARSISRAVATTPSLPVDEEN). Intrachain disulfides connect cysteine 397-cysteine 470, cysteine 400-cysteine 464, and cysteine 428-cysteine 439. Residues 475-522 (TPLLGTDQCVMGPSFWCKSPEAAEMCNALEHCQRLVWKKPVSKINEQP) constitute a propeptide that is removed on maturation. In terms of domain architecture, Saposin A-type 2 spans 476–516 (PLLGTDQCVMGPSFWCKSPEAAEMCNALEHCQRLVWKKPVS).

It is found in the secreted. In terms of biological role, may activate the lysosomal degradation of sphingolipids. This chain is Proactivator polypeptide-like 1 (Psapl1), found in Mus musculus (Mouse).